The primary structure comprises 483 residues: Glycogen synthase (483 aa).

K15 provides a ligand contact to ADP-alpha-D-glucose.

It belongs to the glycosyltransferase 1 family. Bacterial/plant glycogen synthase subfamily.

The enzyme catalyses [(1-&gt;4)-alpha-D-glucosyl](n) + ADP-alpha-D-glucose = [(1-&gt;4)-alpha-D-glucosyl](n+1) + ADP + H(+). The protein operates within glycan biosynthesis; glycogen biosynthesis. Functionally, synthesizes alpha-1,4-glucan chains using ADP-glucose. This chain is Glycogen synthase, found in Desulfatibacillum aliphaticivorans.